We begin with the raw amino-acid sequence, 125 residues long: Fluoride-specific ion channel FluC (125 aa).

2 consecutive transmembrane segments (helical) span residues 4-24 and 34-54; these read LWVA…GVWI and YGTF…LTVL. Residues Gly74 and Thr77 each contribute to the Na(+) site. Residues 99-119 form a helical membrane-spanning segment; sequence VLYFGSSLALGILAVWLGMVV.

It belongs to the fluoride channel Fluc/FEX (TC 1.A.43) family.

Its subcellular location is the cell inner membrane. The catalysed reaction is fluoride(in) = fluoride(out). With respect to regulation, na(+) is not transported, but it plays an essential structural role and its presence is essential for fluoride channel function. Functionally, fluoride-specific ion channel. Important for reducing fluoride concentration in the cell, thus reducing its toxicity. This is Fluoride-specific ion channel FluC from Acidobacterium capsulatum (strain ATCC 51196 / DSM 11244 / BCRC 80197 / JCM 7670 / NBRC 15755 / NCIMB 13165 / 161).